The primary structure comprises 622 residues: MKIEGKVSEHESINMMYERVSKEGVTNIVDRFNAQEKGRCPFCEKGLSCQLCSMGPCRISKDKPTGACGIDAAGMVVRNFTHKNMLGTEAYTYHAIEAAKTLKATAEGKTIYEIKDVEKLKWFAKLLGIEGEDVNELAAKVADFVISDLSSLEKSRLVEIFAPEKRKELWEKLGIFPSGVFQELLTMGSSAMTNVDSNYVSLAKKSMSMSIATCMAAQIALETIQDILFGTPMPHESHSDLGILDPEYVNIAVNGHEPFVGIALIKLAEREEIQEKARKAGAKGLRIIGFIETGQEILQRVDSPVFAGIVGNWIVQEYALATGCVDVFAADMNCTLPSLPEYQRYGVKIVPVSRLVRLKGIDEGLDYEPEKAEEIAMKLIDMAIENFKQRDKSKAVKVEQKKKIVVGFSPEAILKALNGDLNVLLDAIKKGDIKGVVALVSCTTLKNGPHDSSTVTIAKELIKRDILVLSMGCGNAALQVAGLTSMEAVELAGEKLKAVCKALNIPPVLSFGTCTDTGRAAYLVRLIADALGVDVPQLPVAVTAPEYMEQKATIDAVFAVAYGLTTHVSPVPPITGSEDAVKLFTEDVEKLTGGKVVVEEDPLKAAELLEKVIEEKRKALGI.

Residues cysteine 40, cysteine 49, cysteine 52, cysteine 57, and cysteine 68 each coordinate [4Fe-4S] cluster. Histidine 256, cysteine 334, cysteine 442, cysteine 473, and cysteine 514 together coordinate [Ni-4Fe-5S] cluster.

This sequence belongs to the Ni-containing carbon monoxide dehydrogenase family. In terms of assembly, homodimer. It depends on [4Fe-4S] cluster as a cofactor. [Ni-4Fe-5S] cluster serves as cofactor.

The enzyme catalyses CO + 2 oxidized [2Fe-2S]-[ferredoxin] + H2O = 2 reduced [2Fe-2S]-[ferredoxin] + CO2 + 2 H(+). CODH oxidizes carbon monoxide coupled, via CooF, to the reduction of a hydrogen cation by a hydrogenase (possibly CooH). The sequence is that of Carbon monoxide dehydrogenase (cooS) from Archaeoglobus fulgidus (strain ATCC 49558 / DSM 4304 / JCM 9628 / NBRC 100126 / VC-16).